A 599-amino-acid polypeptide reads, in one-letter code: MADKLTRIAIVNHDKCKPKKCRQECKKSCPVVRMGKLCIEVTPQSKIAWISETLCIGCGICIKKCPFGALSIVNLPSNLEKETTHRYCANAFKLHRLPIPRPGEVLGLVGTNGIGKSTALKILAGKQKPNLGKYDDPPDWQEILTYFRGSELQNYFTKILEDDLKAIIKPQYVDQIPKAAKGTVGSILDRKDETKTQAIVCQQLDLTHLKERNVEDLSGGELQRFACAVVCIQKADIFMFDEPSSYLDVKQRLKAAITIRSLINPDRYIIVVEHDLSVLDYLSDFICCLYGVPSAYGVVTMPFSVREGINIFLDGYVPTENLRFRDASLVFKVAETANEEEVKKMCMYKYPGMKKKMGEFELAIVAGEFTDSEIMVMLGENGTGKTTFIRMLAGRLKPDEGGEVPVLNVSYKPQKISPKSTGSVRQLLHEKIRDAYTHPQFVTDVMKPLQIENIIDQEVQTLSGGELQRVALALCLGKPADVYLIDEPSAYLDSEQRLMAARVVKRFILHAKKTAFVVEHDFIMATYLADRVIVFDGVPSKNTVANSPQTLLAGMNKFLSQLEITFRRDPNNYRPRINKLNSIKDVEQKKSGNYFFLDD.

4Fe-4S ferredoxin-type domains follow at residues 7 to 37 (RIAI…MGKL) and 46 to 75 (KIAW…IVNL). Lysine 20 participates in a covalent cross-link: Glycyl lysine isopeptide (Lys-Gly) (interchain with G-Cter in ubiquitin). ABC transporter domains follow at residues 79–315 (LEKE…FLDG) and 342–562 (VKKM…LSQL). Residues 110–117 (GTNGIGKS) and 379–386 (GENGTGKT) each bind ATP. Residue serine 417 is modified to Phosphoserine. At threonine 550 the chain carries Phosphothreonine.

It belongs to the ABC transporter superfamily. ABCE family. In terms of assembly, (Microbial infection) Interacts with Chandipura virus matrix protein. Interacts with PINK1. Interacts with CNOT4. Interacts with PELO. Probably heterodimerizes with RNASEL; this interaction inhibits RNASEL. As to quaternary structure, (Microbial infection) Interacts with HIV-1 proteins Vif and Gag. In terms of assembly, (Microbial infection) Interacts with HIV-2 protein Gag. Ubiquitinated by CNOT4. Ubiquitination mediates the recruitment of autophagy receptors to the mitochondrial outer membrane and initiates mitophagy.

The protein resides in the cytoplasm. The protein localises to the mitochondrion. The enzyme catalyses GTP + H2O = GDP + phosphate + H(+). It carries out the reaction ATP + H2O = ADP + phosphate + H(+). It catalyses the reaction CTP + H2O = CDP + phosphate + H(+). The catalysed reaction is UTP + H2O = UDP + phosphate + H(+). Nucleoside-triphosphatase (NTPase) involved in ribosome recycling by mediating ribosome disassembly. Able to hydrolyze ATP, GTP, UTP and CTP. Splits ribosomes into free 60S subunits and tRNA- and mRNA-bound 40S subunits. Acts either after canonical termination facilitated by release factors (ETF1/eRF1) or after recognition of stalled and vacant ribosomes by mRNA surveillance factors (PELO/Pelota). Involved in the No-Go Decay (NGD) pathway: recruited to stalled ribosomes by the Pelota-HBS1L complex, and drives the disassembly of stalled ribosomes, followed by degradation of damaged mRNAs as part of the NGD pathway. Also plays a role in quality control of translation of mitochondrial outer membrane-localized mRNA. As part of the PINK1-regulated signaling, ubiquitinated by CNOT4 upon mitochondria damage; this modification generates polyubiquitin signals that recruit autophagy receptors to the mitochondrial outer membrane and initiate mitophagy. RNASEL-specific protein inhibitor which antagonizes the binding of 2-5A (5'-phosphorylated 2',5'-linked oligoadenylates) to RNASEL. Negative regulator of the anti-viral effect of the interferon-regulated 2-5A/RNASEL pathway. Functionally, (Microbial infection) May act as a chaperone for post-translational events during HIV-1 capsid assembly. Its function is as follows. (Microbial infection) Plays a role in the down-regulation of the 2-5A/RNASEL pathway during encephalomyocarditis virus (EMCV) and HIV-1 infections. In Homo sapiens (Human), this protein is ATP-binding cassette sub-family E member 1 (ABCE1).